The following is a 546-amino-acid chain: Thermolysin (546 aa).

The signal sequence occupies residues M1–A25. A propeptide spans K26–V228 (activation peptide). Positions 287, 289, 291, and 368 each coordinate Ca(2+). Zn(2+) is bound at residue H372. The active site involves E373. Zn(2+) is bound by residues H376 and E396. Residues N413, D415, E417, E420, Y423, T424, I427, and D430 each coordinate Ca(2+). H461 acts as the Proton donor in catalysis.

Belongs to the peptidase M4 family. Ca(2+) serves as cofactor. The cofactor is Zn(2+).

The protein resides in the secreted. It catalyses the reaction Preferential cleavage: Xaa-|-Leu &gt; Xaa-|-Phe.. Its function is as follows. Extracellular zinc metalloprotease. Has collagenase activity. The sequence is that of Thermolysin (npr) from Bacillus sp. (strain EA1).